We begin with the raw amino-acid sequence, 232 residues long: Megakaryocyte and platelet inhibitory receptor G6b (232 aa).

The first 17 residues, 1–17 (MALVLQLLPLLLSKVQG), serve as a signal peptide directing secretion. Topologically, residues 18-140 (NPEVSLEGNP…GSTHGSEYSK (123 aa)) are extracellular. Asn-32 and Asn-112 each carry an N-linked (GlcNAc...) asparagine glycan. A helical transmembrane segment spans residues 141–161 (VLIPLLGFGLVLGLGALGLVW). Residues 162–232 (WRRSCVPPSH…DASTVYAVVV (71 aa)) are Cytoplasmic-facing. Short sequence motifs (ITIM motif) lie at residues 200–205 (LHYADL) and 226–231 (TVYAVV). Tyr-202 carries the post-translational modification Phosphotyrosine.

As to quaternary structure, interacts (via ITIM motif) with PTPN6 and PTPN11. Binds to heparin. N-glycosylated. Post-translationally, may be O-glycosylated. In terms of processing, phosphorylated.

The protein resides in the cell membrane. Functionally, inhibitory receptor that acts as a critical regulator of hematopoietic lineage differentiation, megakaryocyte function and platelet production. Inhibits platelet aggregation and activation by agonists such as ADP and collagen-related peptide. This regulation of megakaryocate function as well as platelet production ann activation is done through the inhibition (via the 2 ITIM motifs) of the receptors CLEC1B and GP6:FcRgamma signaling. Appears to operate in a calcium-independent manner. This chain is Megakaryocyte and platelet inhibitory receptor G6b, found in Rattus norvegicus (Rat).